The sequence spans 432 residues: Adenylosuccinate synthetase (432 aa).

GTP is bound by residues 13 to 19 (GDEGKGK) and 41 to 43 (GHT). Asp-14 acts as the Proton acceptor in catalysis. Mg(2+)-binding residues include Asp-14 and Gly-41. IMP contacts are provided by residues 14 to 17 (DEGK), 39 to 42 (NAGH), Thr-130, Arg-144, Gln-225, Thr-240, and Arg-304. Residue His-42 is the Proton donor of the active site. 300–306 (ATTGRSR) provides a ligand contact to substrate. GTP is bound by residues Arg-306, 332 to 334 (KLD), and 415 to 417 (STG).

Belongs to the adenylosuccinate synthetase family. As to quaternary structure, homodimer. It depends on Mg(2+) as a cofactor.

Its subcellular location is the cytoplasm. The catalysed reaction is IMP + L-aspartate + GTP = N(6)-(1,2-dicarboxyethyl)-AMP + GDP + phosphate + 2 H(+). It functions in the pathway purine metabolism; AMP biosynthesis via de novo pathway; AMP from IMP: step 1/2. Its function is as follows. Plays an important role in the de novo pathway of purine nucleotide biosynthesis. Catalyzes the first committed step in the biosynthesis of AMP from IMP. This chain is Adenylosuccinate synthetase, found in Yersinia enterocolitica serotype O:8 / biotype 1B (strain NCTC 13174 / 8081).